The primary structure comprises 583 residues: Proline--tRNA ligase (583 aa).

The protein belongs to the class-II aminoacyl-tRNA synthetase family. ProS type 1 subfamily. As to quaternary structure, homodimer.

It is found in the cytoplasm. It catalyses the reaction tRNA(Pro) + L-proline + ATP = L-prolyl-tRNA(Pro) + AMP + diphosphate. Functionally, catalyzes the attachment of proline to tRNA(Pro) in a two-step reaction: proline is first activated by ATP to form Pro-AMP and then transferred to the acceptor end of tRNA(Pro). As ProRS can inadvertently accommodate and process non-cognate amino acids such as alanine and cysteine, to avoid such errors it has two additional distinct editing activities against alanine. One activity is designated as 'pretransfer' editing and involves the tRNA(Pro)-independent hydrolysis of activated Ala-AMP. The other activity is designated 'posttransfer' editing and involves deacylation of mischarged Ala-tRNA(Pro). The misacylated Cys-tRNA(Pro) is not edited by ProRS. This Methylococcus capsulatus (strain ATCC 33009 / NCIMB 11132 / Bath) protein is Proline--tRNA ligase.